We begin with the raw amino-acid sequence, 252 residues long: 14-3-3-like protein GF14 omicron (252 aa).

2 positions are modified to phosphoserine: serine 65 and serine 188.

This sequence belongs to the 14-3-3 family.

Its subcellular location is the nucleus. The protein localises to the cytoplasm. In terms of biological role, is associated with a DNA binding complex that binds to the G box, a well-characterized cis-acting DNA regulatory element found in plant genes. This chain is 14-3-3-like protein GF14 omicron (GRF11), found in Arabidopsis thaliana (Mouse-ear cress).